The sequence spans 704 residues: Translin-associated factor X-interacting protein 1 (704 aa).

The tract at residues 1–37 (MANLQERKSFSKPRISIQASGGTPEAKGIEKRKLSQK) is disordered. 2 coiled-coil regions span residues 190 to 230 (EISV…AEEY) and 304 to 342 (RRDL…LQLH).

As to quaternary structure, interacts with TSNAX. In terms of tissue distribution, specifically expressed in testes. Predominantly detected in the post-meiotic stages of germ cells.

Its subcellular location is the cytoplasm. It localises to the perinuclear region. Its function is as follows. Possible role in spermatogenesis. This chain is Translin-associated factor X-interacting protein 1, found in Mus musculus (Mouse).